The primary structure comprises 445 residues: MLFLYRDEAVLTLDAFEQCLKDCFPQGLNGKKTAVALSGGLDSVVLLHLLVCAGKRAGFVPEALHIHHGLSPRADDWADFCRNYCDMLGVGLETVKVCVEKNGLGIEAAARQKRYAEFAEKGFDVLALAHHRDDQIETFMLAVARGGGLRALAAMPAVRPLGENGIIWRPLLPFSRQDIWDYARKHGLPNIEDESNTDTAYLRNRFRHRILPELSAQIPHFGRHVLNNVRALQEDLALLEEVVVQDCRWVCGAGYFDTARWLTFSPRRKTHILRNFLKENGIPVPNQNALADIARVLTEAKTGRWNLQGFELHHYAGRLFVFASEQLAKPAFLKDGTISGNLKKILTEHRFVLKRHPFGLPEAMLEQDGILRTVAASDTLAVGGIHKNVKKILQGKRVLPFLRPIWPLVADSGNRPLALANCCADFQISVSDGILPVHPDFPILF.

38–43 contributes to the ATP binding site; it reads SGGLDS.

The protein belongs to the tRNA(Ile)-lysidine synthase family.

The protein resides in the cytoplasm. It carries out the reaction cytidine(34) in tRNA(Ile2) + L-lysine + ATP = lysidine(34) in tRNA(Ile2) + AMP + diphosphate + H(+). Functionally, ligates lysine onto the cytidine present at position 34 of the AUA codon-specific tRNA(Ile) that contains the anticodon CAU, in an ATP-dependent manner. Cytidine is converted to lysidine, thus changing the amino acid specificity of the tRNA from methionine to isoleucine. The chain is tRNA(Ile)-lysidine synthase from Neisseria gonorrhoeae (strain ATCC 700825 / FA 1090).